The chain runs to 283 residues: Putative Ig-like domain-containing protein ORF10 (283 aa).

The first 55 residues, 1–55 (MIDKRNKKAVTHISTCLCHSSIPIYGDSPFLNTHRAAMDPRPLVLLLLLASHIST), serve as a signal peptide directing secretion. Residues Asn75, Asn92, Asn121, Asn157, Asn179, Asn198, Asn223, and Asn229 are each glycosylated (N-linked (GlcNAc...) asparagine; by host). The region spanning 129 to 227 (QPLGQSIHHA…IDQQTNLTLT (99 aa)) is the Ig-like domain.

The protein is Putative Ig-like domain-containing protein ORF10 of Galliformes (FAdV-1).